The following is a 51-amino-acid chain: Large ribosomal subunit protein eL39 (51 aa).

This sequence belongs to the eukaryotic ribosomal protein eL39 family. As to quaternary structure, interacts with IMPACT.

This chain is Large ribosomal subunit protein eL39 (RPL39), found in Gallus gallus (Chicken).